We begin with the raw amino-acid sequence, 376 residues long: TraB domain-containing protein (376 aa).

Position 1 is an N-acetylmethionine (M1). The disordered stretch occupies residues 1 to 34 (MDGEEQQPPHEANVEPVVPSEASEPVPRVLSGDP). Low complexity predominate over residues 14–27 (VEPVVPSEASEPVP). T65 bears the Phosphothreonine mark.

This chain is TraB domain-containing protein (TRABD), found in Homo sapiens (Human).